A 190-amino-acid polypeptide reads, in one-letter code: Carbonic anhydrase 2 (190 aa).

The protein belongs to the beta-class carbonic anhydrase family. As to quaternary structure, homohexamer.

It is found in the cytoplasm. The catalysed reaction is hydrogencarbonate + H(+) = CO2 + H2O. Reversible hydration of carbon dioxide. The chain is Carbonic anhydrase 2 from Flaveria linearis (Narrowleaf yellowtops).